The chain runs to 29 residues: Putative membrane protein PmrR (29 aa).

Residues 5-27 (VYESLTTVFSVLVVSSFLYIWFA) form a helical membrane-spanning segment.

The protein localises to the cell inner membrane. In terms of biological role, may bind to BasS and modulate its sensor kinase activity. The protein is Putative membrane protein PmrR (pmrR) of Escherichia coli (strain K12).